The chain runs to 90 residues: UPF0298 protein RBAM_014860 (90 aa).

Belongs to the UPF0298 family.

The protein resides in the cytoplasm. The protein is UPF0298 protein RBAM_014860 of Bacillus velezensis (strain DSM 23117 / BGSC 10A6 / LMG 26770 / FZB42) (Bacillus amyloliquefaciens subsp. plantarum).